The primary structure comprises 621 residues: Very-long-chain aldehyde decarbonylase GL1-5 (621 aa).

5 consecutive transmembrane segments (helical) span residues 99 to 119 (IILS…GQHL), 126 to 146 (GAGL…YWFH), 186 to 206 (LLFS…IIAF), 224 to 244 (FELV…LMYT), and 332 to 352 (MWPL…SFTV). The Fatty acid hydroxylase domain occupies 138-272 (VEFLYYWFHR…MPFYDYIYNT (135 aa)).

This sequence belongs to the sterol desaturase family. Homodimer.

The protein localises to the endoplasmic reticulum membrane. The catalysed reaction is a long-chain fatty aldehyde + 2 NADPH + O2 + H(+) = a long-chain alkane + formate + 2 NADP(+) + H2O. Aldehyde decarbonylase involved in the conversion of aldehydes to alkanes. Core component of a very-long-chain alkane synthesis complex. In Oryza sativa subsp. indica (Rice), this protein is Very-long-chain aldehyde decarbonylase GL1-5.